Here is a 174-residue protein sequence, read N- to C-terminus: MTEKRNIFLIGPMGAGKSTIGRHLAQQLSMEFYDSDQEIEKRTGVDVSWIFDIEGELGFRKREQKIISEIIDKRGIVLSTGGGSILSREIRNKLSSRGVVIYLETSVEKQLVRTKKNKQRPLLQVDNTSIQTVLEELAFHRNPLYQSIADITIRMNDRSIKAIVFYIIRLLNNF.

ATP is bound at residue 14 to 19 (GAGKST). A Mg(2+)-binding site is contributed by S18. Positions 36, 60, and 82 each coordinate substrate. R120 contributes to the ATP binding site. R141 contacts substrate. Position 158 (R158) interacts with ATP.

This sequence belongs to the shikimate kinase family. As to quaternary structure, monomer. Mg(2+) is required as a cofactor.

The protein resides in the cytoplasm. It carries out the reaction shikimate + ATP = 3-phosphoshikimate + ADP + H(+). The protein operates within metabolic intermediate biosynthesis; chorismate biosynthesis; chorismate from D-erythrose 4-phosphate and phosphoenolpyruvate: step 5/7. In terms of biological role, catalyzes the specific phosphorylation of the 3-hydroxyl group of shikimic acid using ATP as a cosubstrate. The chain is Shikimate kinase from Buchnera aphidicola subsp. Baizongia pistaciae (strain Bp).